The sequence spans 78 residues: RTX-VII (78 aa).

The first 22 residues, 1-22 (MKTIVYLIVSILLLSSTVLVLA), serve as a signal peptide directing secretion. A propeptide spanning residues 23–40 (EGNAASHELQEYPIEEQR) is cleaved from the precursor. Disulfide bonds link Cys42/Cys58, Cys47/Cys63, Cys57/Cys73, and Cys65/Cys71. Arg76 is modified (arginine amide).

In terms of tissue distribution, expressed by the venom gland.

The protein localises to the secreted. Functionally, agonist of rat Nav1.3/SCN3A. This toxin increases the peak current amplitude, and potently inhibits the fast inactivation of the channel (EC(50)=120 nM). The inhibition of fast inactivation is voltage-independent (depolarizing voltages ranging from 220 mV to 130 mV). The toxin might bind to the domain IV of the Nav1.3 channel, while domain II might not participate in interacting with the toxin but could determine the efficacy of RTX-VII. In vivo, when intracerebroventricularly injected into mice, the toxin causes involuntary body twitching (seizure-like symptoms). This chain is RTX-VII, found in Macrothele raveni (Funnel-web spider).